Consider the following 625-residue polypeptide: MLNMWKVRELVDKATNVVMNYSEIESKVREATNDDPWGPSGQLMGEIAKATFMYEQFPELMNMLWSRMLKDNKKNWRRVYKSLLLLAYLIRNGSERVVTSAREHIYDLRSLENYHFVDEHGKDQGINIRQKVKELVEFAQDDDRLREERKKAKKNKDKYVGVSSDSVGGFRYSERYDPEPKSKWDEEWDKNKSAFPFSDKLGELSDKIGSTIDDTISKFRRKDREDSPERCSDSDEEKKARRGRSPKGEFKDEEETVTTKHIHITQATETTTTRHKRTANPSKTIDLGAAAHYTGDKASPDQNASTHTPQSSVKTSVPSSKSSGDLVDLFDGTSQSTGGSADLFGGFADFGSAAASGSFPSQVTATSGNGDFGDWSAFNQAPSGPVASSGEFFGSASQPAVELVSGSQSALGPPPAASNSSDLFDLMGSSQATMTSSQSMNFSMMSTNTVGLGLPMSRSQNTDMVQKSVSKTLPSTWSDPSVNISLDNLLPGMQPSKPQQPSLNTMIQQQNMQQPMNVMTQSFGAVNLSSPSNMLPVRPQTNALIGGPMPMSMPNVMTGTMGMAPLGNTPMMNQSMMGMNMNIGMSAAGMGLTGTMGMGMPNIAMTSGTVQPKQDAFANFANFSK.

The ENTH domain occupies 16 to 149 (NVVMNYSEIE…QDDDRLREER (134 aa)). Arg-29 serves as a coordination point for a 1,2-diacyl-sn-glycero-3-phospho-(1D-myo-inositol-4,5-bisphosphate). Positions 52–54 (FMY) are interaction with VTI1B. Residue Arg-67 coordinates a 1,2-diacyl-sn-glycero-3-phospho-(1D-myo-inositol-4,5-bisphosphate). Interaction with VTI1B stretches follow at residues 94–96 (SER) and 142–153 (DDRLREERKKAK). Phosphoserine is present on residues Ser-163, Ser-166, Ser-173, Ser-205, Ser-210, Ser-227, Ser-245, and Ser-299. A disordered region spans residues 219-331 (FRRKDREDSP…SSGDLVDLFD (113 aa)). A compositionally biased stretch (basic and acidic residues) spans 222 to 239 (KDREDSPERCSDSDEEKK). Residue Thr-308 is modified to Phosphothreonine. Low complexity predominate over residues 308 to 323 (TPQSSVKTSVPSSKSS). Ser-312 is modified (phosphoserine). The tract at residues 340–352 (SADLFGGFADFGS) is interaction with AP1G1, AP1G2 and GGA2. The segment at 368–380 (GNGDFGDWSAFNQ) is interaction with AP1G1 and AP1G2. Phosphoserine is present on Ser-624.

Belongs to the epsin family. In terms of assembly, binds clathrin heavy chain and AP-2. Interacts with VTI1B. Interacts with GGA2 (via GAE domain). Interacts with AP1G1 (via GAE domain). Interacts with AP1G2 (via GAE domain). In terms of tissue distribution, ubiquitously expressed at low to intermediate levels.

The protein resides in the cytoplasm. It localises to the perinuclear region. The protein localises to the membrane. It is found in the cytoplasmic vesicle. Its subcellular location is the clathrin-coated vesicle. In terms of biological role, binds to membranes enriched in phosphatidylinositol 4,5-bisphosphate (PtdIns(4,5)P2). May have a role in transport via clathrin-coated vesicles from the trans-Golgi network to endosomes. Stimulates clathrin assembly. This is Clathrin interactor 1 (CLINT1) from Homo sapiens (Human).